We begin with the raw amino-acid sequence, 142 residues long: Centromere protein S (142 aa).

Residues 107–142 are disordered; the sequence is LKGKAKKKRKPEDESRSSRESMAEELDGAEELQSES. The span at 116-128 shows a compositional bias: basic and acidic residues; that stretch reads KPEDESRSSRESM. Residues 129-142 are compositionally biased toward acidic residues; that stretch reads AEELDGAEELQSES.

Belongs to the TAF9 family. CENP-S/MHF1 subfamily. As to quaternary structure, heterodimer with CENPX, sometimes called MHF; this interaction stabilizes both partners. MHF heterodimers can assemble to form tetrameric structures. MHF also coassemble with CENPT-CENPW heterodimers at centromeres to form the tetrameric CENP-T-W-S-X complex. Forms a discrete complex with FANCM and CENPX, called FANCM-MHF; this interaction, probably mediated by direct binding between CENPS and FANCM, leads to synergistic activation of double-stranded DNA binding and strongly stimulates FANCM-mediated DNA remodeling. Recruited by FANCM to the Fanconi anemia (FA) core complex, which consists of CENPS, CENPX, FANCA, FANCB, FANCC, FANCE, FANCF, FANCG, FANCL, FANCM, FAAP24 and FAAP100. The FA core complex associates with Bloom syndrome (BLM) complex, which consists of at least BLM, DNA topoisomerase 3-alpha (TOP3A), RMI1/BLAP75, RPA1/RPA70 and RPA2/RPA32. The super complex between FA and BLM is called BRAFT. Component of the CENPA-CAD complex, composed of CENPI, CENPK, CENPL, CENPO, CENPP, CENPQ, CENPR and CENPS. The CENPA-CAD complex is probably recruited on centromeres by the CENPA-NAC complex, at least composed of CENPA, CENPC, CENPH, CENPM, CENPN, CENPT and CENPU.

Its subcellular location is the nucleus. The protein resides in the chromosome. The protein localises to the centromere. It is found in the kinetochore. DNA-binding component of the Fanconi anemia (FA) core complex. Required for the normal activation of the FA pathway, leading to monoubiquitination of the FANCI-FANCD2 complex in response to DNA damage, cellular resistance to DNA cross-linking drugs, and prevention of chromosomal breakage. In complex with CENPX (MHF heterodimer), crucial cofactor for FANCM in both binding and ATP-dependent remodeling of DNA. Stabilizes FANCM. In complex with CENPX and FANCM (but not other FANC proteins), rapidly recruited to blocked forks and promotes gene conversion at blocked replication forks. In complex with CENPT, CENPW and CENPX (CENP-T-W-S-X heterotetramer), involved in the formation of a functional kinetochore outer plate, which is essential for kinetochore-microtubule attachment and faithful mitotic progression. As a component of MHF and CENP-T-W-S-X complexes, binds DNA and bends it to form a nucleosome-like structure. DNA-binding function is fulfilled in the presence of CENPX, with the following preference for DNA substates: Holliday junction &gt; double-stranded &gt; splay arm &gt; single-stranded. Does not bind DNA on its own. The chain is Centromere protein S (Cenps) from Mus musculus (Mouse).